A 349-amino-acid polypeptide reads, in one-letter code: Alcohol dehydrogenase 1 (349 aa).

7 residues coordinate Zn(2+): C46, H69, C100, C103, C106, C114, and C156. NAD(+) contacts are provided by residues 180–186, D204, K208, 270–272, and R342; these read GAGGGLG and VGL.

The protein belongs to the zinc-containing alcohol dehydrogenase family. As to quaternary structure, homotetramer. Requires Zn(2+) as cofactor.

The catalysed reaction is a primary alcohol + NAD(+) = an aldehyde + NADH + H(+). It catalyses the reaction a secondary alcohol + NAD(+) = a ketone + NADH + H(+). This Caenorhabditis elegans protein is Alcohol dehydrogenase 1.